The following is a 138-amino-acid chain: 10 kDa chaperonin 1, chloroplastic (138 aa).

A chloroplast-targeting transit peptide spans 1–61 (MASSFITVPK…VPQADRVLVR (61 aa)). The cpn-10 domain stretch occupies residues 50 to 137 (KVVPQADRVL…CKESDLLAIV (88 aa)).

Belongs to the GroES chaperonin family. As to expression, expressed at low levels in germinating seeds, seedlings, rosettes leaves, flowers and siliques.

The protein resides in the plastid. It localises to the chloroplast. In terms of biological role, functions as a co-chaperone for protein folding in chloroplasts. In Arabidopsis thaliana (Mouse-ear cress), this protein is 10 kDa chaperonin 1, chloroplastic.